We begin with the raw amino-acid sequence, 1527 residues long: Lysophospholipase nte1 (1527 aa).

Residues 1 to 69 (MADDGGPFPL…PPPAPSTMVG (69 aa)) are Cytoplasmic-facing. Residues 70-90 (WIGWVFSFVFQVIPSILYWAI) traverse the membrane as a helical segment. At 91–112 (TFCTITLPTWLFTLFSMSLTFT) the chain is on the lumenal side. The chain crosses the membrane as a helical span at residues 113–133 (MNFTTLLLIALAIVSTVSWFI). The Cytoplasmic segment spans residues 134–1527 (RYRFLNMYSR…RTLAPRRASI (1394 aa)). Disordered stretches follow at residues 240–259 (ADHELNLAGDDSTDEEGQNV), 299–387 (LSSS…HPDI), 576–596 (EKEQSPFRPPTMRGPASPFHR), and 750–785 (AHGEEAFPTLKRTTTASSRTSSVAPGGSDSKRRRQS). A compositionally biased stretch (basic and acidic residues) spans 355-373 (HLEESRGTPDHDHQPESRT). Residues 685–804 (GGTS…VGSV) and 846–966 (RLTS…IAQR) contribute to the a nucleoside 3',5'-cyclic phosphate site. Residues 761–771 (RTTTASSRTSS) show a composition bias toward low complexity. Positions 1224–1388 (LVLGGGGARG…IDNLTVPHMK (165 aa)) constitute a PNPLA domain. The GXGXXG motif lies at 1228-1233 (GGGARG). The short motif at 1255 to 1259 (GTSIG) is the GXSXG element. Ser-1257 acts as the Nucleophile in catalysis. Asp-1375 serves as the catalytic Proton acceptor. Residues 1375 to 1377 (DGG) carry the DGA/G motif.

Belongs to the NTE family.

It localises to the endoplasmic reticulum membrane. The catalysed reaction is a 1-acyl-sn-glycero-3-phosphocholine + H2O = sn-glycerol 3-phosphocholine + a fatty acid + H(+). With respect to regulation, inhibited by organophosphorus esters. In terms of biological role, intracellular phospholipase B that catalyzes the double deacylation of phosphatidylcholine (PC) to glycerophosphocholine (GroPCho). Plays an important role in membrane lipid homeostasis. Responsible for the rapid PC turnover in response to inositol, elevated temperatures, or when choline is present in the growth medium. In Aspergillus terreus (strain NIH 2624 / FGSC A1156), this protein is Lysophospholipase nte1 (nte1).